The following is a 366-amino-acid chain: D-alanine--D-alanine ligase (366 aa).

The ATP-grasp domain occupies 146–352 (KICFEHAGLQ…YTELINRLIE (207 aa)). 179–234 (EKKLRYPMFVKPANMGSSVGISKAHNRNELIEAIELALAYDRKFLIEKAINAREME) lines the ATP pocket. Mg(2+)-binding residues include Asp-305, Glu-319, and Asn-321.

Belongs to the D-alanine--D-alanine ligase family. Mg(2+) serves as cofactor. It depends on Mn(2+) as a cofactor.

Its subcellular location is the cytoplasm. The enzyme catalyses 2 D-alanine + ATP = D-alanyl-D-alanine + ADP + phosphate + H(+). The protein operates within cell wall biogenesis; peptidoglycan biosynthesis. Its function is as follows. Cell wall formation. In Chloroherpeton thalassium (strain ATCC 35110 / GB-78), this protein is D-alanine--D-alanine ligase.